A 289-amino-acid polypeptide reads, in one-letter code: Heterokaryon incompatibility protein S (289 aa).

Residues 1 to 227 (MSEPFEIVAG…KIDAIVGRNS (227 aa)) are globular domain. The segment at 218 to 289 (KIDAIVGRNS…EYGGKGFWDN (72 aa)) is prion domain (PrD).

In terms of assembly, homodimer. Forms heterodimers with het-s.

Its subcellular location is the cytoplasm. In terms of biological role, responsible for heterokaryon incompatibility, a process that ensures that during spontaneous, vegetative cell fusion only compatible cells from the same colony survive (non-self-recognition). Interaction with the prion form [het-s] of incompatible cells triggers a lethal reaction that prevents the formation of viable heterokaryons. In Podospora anserina (strain S / ATCC MYA-4624 / DSM 980 / FGSC 10383) (Pleurage anserina), this protein is Heterokaryon incompatibility protein S (het-S).